Reading from the N-terminus, the 572-residue chain is DNA polymerase (572 aa).

A 3'-5' exonuclease and strand displacement activities region spans residues 1 to 222 (MSRKMFSCDF…LPMDKEIRKA (222 aa)). The interval 56 to 66 (YFHNLKFDGAF) is interaction with the primer terminal protein. Asp-142 and Asp-166 together coordinate Mg(2+). Residues 223 to 226 (YRGG) form a DNA-binding; Involved in the formation of a stable complex between TP and phi29 DNA polymerase region. The segment at 227–572 (FTWLNDKYKE…VLVDSVFTIK (346 aa)) is initiation, polymerization and pyrophosphorolytic activities. Mg(2+) is bound by residues Asp-246 and Val-247. 5-methyl-UTP contacts are provided by Tyr-251, Lys-368, and Lys-380. Mg(2+) contacts are provided by Asp-453 and Asp-455. Asp-455 is a binding site for 5-methyl-UTP.

Belongs to the DNA polymerase type-B family. In terms of assembly, interacts with the primer terminal protein; this interaction allows the initiation of TP-primed DNA replication at both viral DNA ends. Interacts with DNA. Requires Mg(2+) as cofactor.

It carries out the reaction DNA(n) + a 2'-deoxyribonucleoside 5'-triphosphate = DNA(n+1) + diphosphate. Functionally, polymerase responsible for protein-primed viral DNA replication by strand displacement with high processivity and fidelity. To start replication, the DNA polymerase forms a heterodimer with a free primer terminal protein (TP), recognizes the replication origins at both 5' ends of the linear chromosome, and initiates replication using as primer the OH-group of Ser-232 of the TP. This polymerase possesses three enzymatic activities: DNA synthesis (polymerase), primer terminal protein (TP) deoxynucleotidylation, which is the formation of a covalent linkage (phosphoester) between the hydroxyl group of a specific serine residue in TP and 5'-dAMP, a reaction directed by the third T at the 3' end, and 3' to 5' exonuclease activity. Exonuclease activity has a proofreading purpose. Since the polymerase initiates the replication on the third thymine, the TP-dAMP initiation product translocates backwards to recover the template information of the 2 terminal nucleotide (sliding back-mechanism). This Bacillus phage Nf (Bacteriophage Nf) protein is DNA polymerase.